We begin with the raw amino-acid sequence, 491 residues long: Neuronal acetylcholine receptor subunit beta-2 (491 aa).

A signal peptide spans 1 to 18 (MALLRVLCLLAALRRSLC). The Extracellular segment spans residues 19 to 226 (TDTEERLVEY…ITYDFIIRRK (208 aa)). N44 and N161 each carry an N-linked (GlcNAc...) asparagine glycan. C148 and C162 are joined by a disulfide. The helical transmembrane segment at 227–251 (PLFYTINLIIPCILITSLAILVFYL) threads the bilayer. Residues 252–258 (PSDCGEK) lie on the Cytoplasmic side of the membrane. A helical membrane pass occupies residues 259–277 (MTLCISVLLALTVFLLLIS). Over 278–292 (KIVPPTSLDVPLVGK) the chain is Extracellular. Residues 293–314 (YLMFTMVLVTFSIVTSVCVLNV) traverse the membrane as a helical segment. Topologically, residues 315–449 (HHRSPTTHTM…WKYVAMVIDR (135 aa)) are cytoplasmic. Residues 450-468 (LFLWIFVFVCVFGTVGMFL) traverse the membrane as a helical segment.

This sequence belongs to the ligand-gated ion channel (TC 1.A.9) family. Acetylcholine receptor (TC 1.A.9.1) subfamily. Beta-2/CHRNB2 sub-subfamily. In terms of assembly, neuronal AChR is a heteropentamer composed of two different types of subunits: alpha and beta. CHRNB2/Beta-2 subunit can be combined to CHRNA2/alpha-2, CHRNA3/alpha-3 or CHRNA4/alpha-4, CHRNA5/alpha-5, CHRNA6/alpha-6 and CHRNB3/beta-3 to give rise to functional receptors.

The protein localises to the synaptic cell membrane. It is found in the cell membrane. It carries out the reaction Ca(2+)(in) = Ca(2+)(out). It catalyses the reaction K(+)(in) = K(+)(out). The enzyme catalyses Na(+)(in) = Na(+)(out). With respect to regulation, activated by a myriad of ligands such as acetylcholine, cytisine, nicotine, choline and epibatidine. nAChR activity is inhibited by the antagonist alpha-conotoxins BuIA, PnIA, PnIC, GID and MII, small disulfide-constrained peptides from cone snails. Its function is as follows. Component of neuronal acetylcholine receptors (nAChRs) that function as pentameric, ligand-gated cation channels with high calcium permeability among other activities. nAChRs are excitatory neurotrasnmitter receptors formed by a collection of nAChR subunits known to mediate synaptic transmission in the nervous system and the neuromuscular junction. Each nAchR subunit confers differential attributes to channel properties, including activation, deactivation and desensitization kinetics, pH sensitivity, cation permeability, and binding to allosteric modulators. CHRNB2 forms heteropentameric neuronal acetylcholine receptors with CHRNA2, CHRNA3, CHRNA4 and CHRNA6, as well as CHRNA5 and CHRNB3 as accesory subunits. The protein is Neuronal acetylcholine receptor subunit beta-2 (CHRNB2) of Gallus gallus (Chicken).